A 436-amino-acid polypeptide reads, in one-letter code: Histidine--tRNA ligase (436 aa).

It belongs to the class-II aminoacyl-tRNA synthetase family.

The protein resides in the cytoplasm. The catalysed reaction is tRNA(His) + L-histidine + ATP = L-histidyl-tRNA(His) + AMP + diphosphate + H(+). The sequence is that of Histidine--tRNA ligase from Thermococcus kodakarensis (strain ATCC BAA-918 / JCM 12380 / KOD1) (Pyrococcus kodakaraensis (strain KOD1)).